The sequence spans 241 residues: uncharacterized protein (241 aa).

S-adenosyl-L-methionine is bound by residues 78-80 (TSA), Gly111, Ile131, and 138-140 (SSL).

Belongs to the class IV-like SAM-binding methyltransferase superfamily. RNA methyltransferase TrmH family.

This is an uncharacterized protein from Haemophilus influenzae (strain ATCC 51907 / DSM 11121 / KW20 / Rd).